The chain runs to 432 residues: UDP-N-acetylmuramoylalanine--D-glutamate ligase (432 aa).

Gly98–Thr104 contacts ATP.

This sequence belongs to the MurCDEF family.

The protein localises to the cytoplasm. It carries out the reaction UDP-N-acetyl-alpha-D-muramoyl-L-alanine + D-glutamate + ATP = UDP-N-acetyl-alpha-D-muramoyl-L-alanyl-D-glutamate + ADP + phosphate + H(+). The protein operates within cell wall biogenesis; peptidoglycan biosynthesis. Its function is as follows. Cell wall formation. Catalyzes the addition of glutamate to the nucleotide precursor UDP-N-acetylmuramoyl-L-alanine (UMA). The sequence is that of UDP-N-acetylmuramoylalanine--D-glutamate ligase from Fusobacterium nucleatum subsp. nucleatum (strain ATCC 25586 / DSM 15643 / BCRC 10681 / CIP 101130 / JCM 8532 / KCTC 2640 / LMG 13131 / VPI 4355).